Here is a 367-residue protein sequence, read N- to C-terminus: MNKYKNIKRRKSNRIYVGNVPIGDGAPISVQSMTNTQTTNIEETIKQIIKLKKVGVDIVRISVPTLEAAESFKIIKLNVDVPLIADIHFDYRLAIKSIKYGADCLRINPGNIGNKRRILDIVNCAKDKNIPIRIGVNAGSLENDLLKKYKSPIPEALVESAIRHIEYLDSLNFNQFKVSVKTSDVFSAIEANEILAKKTVQPIHIGITESGALRNGIVKSSIGITSLLLSGIGDTLRISLAADPVEEVKVGYDILKTLGIRFRGVNFIACPTCSRQEFNVIDVVNQLEKNLEDLSTPMNVSIIGCIVNGIGEAKVSTLGIVGGSKTSALYKDGIRQKNKLKNQEIIKELEIKIRKKAKSLDKLKKII.

[4Fe-4S] cluster contacts are provided by cysteine 270, cysteine 273, cysteine 305, and glutamate 312.

The protein belongs to the IspG family. It depends on [4Fe-4S] cluster as a cofactor.

It catalyses the reaction (2E)-4-hydroxy-3-methylbut-2-enyl diphosphate + oxidized [flavodoxin] + H2O + 2 H(+) = 2-C-methyl-D-erythritol 2,4-cyclic diphosphate + reduced [flavodoxin]. It participates in isoprenoid biosynthesis; isopentenyl diphosphate biosynthesis via DXP pathway; isopentenyl diphosphate from 1-deoxy-D-xylulose 5-phosphate: step 5/6. Its function is as follows. Converts 2C-methyl-D-erythritol 2,4-cyclodiphosphate (ME-2,4cPP) into 1-hydroxy-2-methyl-2-(E)-butenyl 4-diphosphate. The protein is 4-hydroxy-3-methylbut-2-en-1-yl diphosphate synthase (flavodoxin) of Buchnera aphidicola subsp. Schizaphis graminum (strain Sg).